The following is a 194-amino-acid chain: NADH-quinone oxidoreductase subunit B (194 aa).

Positions 72, 73, 137, and 167 each coordinate [4Fe-4S] cluster.

This sequence belongs to the complex I 20 kDa subunit family. NDH-1 is composed of 14 different subunits. Subunits NuoB, C, D, E, F, and G constitute the peripheral sector of the complex. [4Fe-4S] cluster serves as cofactor.

The protein resides in the cell inner membrane. It carries out the reaction a quinone + NADH + 5 H(+)(in) = a quinol + NAD(+) + 4 H(+)(out). In terms of biological role, NDH-1 shuttles electrons from NADH, via FMN and iron-sulfur (Fe-S) centers, to quinones in the respiratory chain. Couples the redox reaction to proton translocation (for every two electrons transferred, four hydrogen ions are translocated across the cytoplasmic membrane), and thus conserves the redox energy in a proton gradient. The protein is NADH-quinone oxidoreductase subunit B of Granulibacter bethesdensis (strain ATCC BAA-1260 / CGDNIH1).